The following is a 150-amino-acid chain: Large ribosomal subunit protein uL11 (150 aa).

The protein belongs to the universal ribosomal protein uL11 family. In terms of assembly, part of the ribosomal stalk of the 50S ribosomal subunit. Interacts with L10 and the large rRNA to form the base of the stalk. L10 forms an elongated spine to which L12 dimers bind in a sequential fashion forming a multimeric L10(L12)X complex. One or more lysine residues are methylated.

Its function is as follows. Forms part of the ribosomal stalk which helps the ribosome interact with GTP-bound translation factors. The polypeptide is Large ribosomal subunit protein uL11 (Ureaplasma urealyticum serovar 10 (strain ATCC 33699 / Western)).